The primary structure comprises 253 residues: NADH-quinone oxidoreductase subunit C (253 aa).

2 disordered regions span residues 1–33 (MSPD…DTEP) and 234–253 (IPVE…RAYS).

It belongs to the complex I 30 kDa subunit family. In terms of assembly, NDH-1 is composed of 14 different subunits. Subunits NuoB, C, D, E, F, and G constitute the peripheral sector of the complex.

It localises to the cell membrane. It carries out the reaction a quinone + NADH + 5 H(+)(in) = a quinol + NAD(+) + 4 H(+)(out). NDH-1 shuttles electrons from NADH, via FMN and iron-sulfur (Fe-S) centers, to quinones in the respiratory chain. The immediate electron acceptor for the enzyme in this species is believed to be a menaquinone. Couples the redox reaction to proton translocation (for every two electrons transferred, four hydrogen ions are translocated across the cytoplasmic membrane), and thus conserves the redox energy in a proton gradient. The chain is NADH-quinone oxidoreductase subunit C from Nocardia farcinica (strain IFM 10152).